Here is a 276-residue protein sequence, read N- to C-terminus: Undecaprenyl-diphosphatase 1 (276 aa).

5 helical membrane passes run 83 to 103 (FTLNVVIATIPAIALGLLFEK), 108 to 128 (VLFSPVPVAFALVVGGAIILW), 187 to 207 (VATEFSFFLAIPIIFGATLYE), 217 to 237 (VDSLGLFALGLVAAFVSAFVC), and 252 to 272 (VFAWYRIAFGLFVLLVGYSGW).

The protein belongs to the UppP family.

Its subcellular location is the cell inner membrane. It carries out the reaction di-trans,octa-cis-undecaprenyl diphosphate + H2O = di-trans,octa-cis-undecaprenyl phosphate + phosphate + H(+). Its function is as follows. Catalyzes the dephosphorylation of undecaprenyl diphosphate (UPP). Confers resistance to bacitracin. In Burkholderia cenocepacia (strain HI2424), this protein is Undecaprenyl-diphosphatase 1.